Reading from the N-terminus, the 686-residue chain is Methionine--tRNA ligase (686 aa).

Positions 15-25 match the 'HIGH' region motif; sequence PYANGSIHLGH. Cys146, Cys149, Cys159, and Cys162 together coordinate Zn(2+). A 'KMSKS' region motif is present at residues 332-336; that stretch reads KMSKS. Lys335 is an ATP binding site. In terms of domain architecture, tRNA-binding spans 585–686; the sequence is AFEAVDMRIA…EGAQPGMRVM (102 aa).

Belongs to the class-I aminoacyl-tRNA synthetase family. MetG type 1 subfamily. As to quaternary structure, homodimer. The cofactor is Zn(2+).

Its subcellular location is the cytoplasm. It catalyses the reaction tRNA(Met) + L-methionine + ATP = L-methionyl-tRNA(Met) + AMP + diphosphate. Is required not only for elongation of protein synthesis but also for the initiation of all mRNA translation through initiator tRNA(fMet) aminoacylation. This chain is Methionine--tRNA ligase, found in Aliivibrio fischeri (strain MJ11) (Vibrio fischeri).